We begin with the raw amino-acid sequence, 274 residues long: 3-methyl-2-oxobutanoate hydroxymethyltransferase (274 aa).

Mg(2+)-binding residues include aspartate 49 and aspartate 88. 3-methyl-2-oxobutanoate-binding positions include 49–50 (DS), aspartate 88, and lysine 118. Glutamate 120 lines the Mg(2+) pocket. Glutamate 187 functions as the Proton acceptor in the catalytic mechanism.

This sequence belongs to the PanB family. Homodecamer; pentamer of dimers. The cofactor is Mg(2+).

It localises to the cytoplasm. The catalysed reaction is 3-methyl-2-oxobutanoate + (6R)-5,10-methylene-5,6,7,8-tetrahydrofolate + H2O = 2-dehydropantoate + (6S)-5,6,7,8-tetrahydrofolate. The protein operates within cofactor biosynthesis; (R)-pantothenate biosynthesis; (R)-pantoate from 3-methyl-2-oxobutanoate: step 1/2. In terms of biological role, catalyzes the reversible reaction in which hydroxymethyl group from 5,10-methylenetetrahydrofolate is transferred onto alpha-ketoisovalerate to form ketopantoate. The polypeptide is 3-methyl-2-oxobutanoate hydroxymethyltransferase (Rhodopseudomonas palustris (strain HaA2)).